We begin with the raw amino-acid sequence, 284 residues long: HTH-type transcriptional activator RhaR (284 aa).

One can recognise an HTH araC/xylS-type domain in the interval 181–279 (DMLMNALRAS…GVSPSAYRQR (99 aa)). 2 consecutive DNA-binding regions (H-T-H motif) follow at residues 198 to 219 (EAFC…KEQT) and 246 to 269 (IGDV…HQAF).

As to quaternary structure, binds DNA as a dimer.

It is found in the cytoplasm. Activates expression of the rhaSR operon in response to L-rhamnose. In Pectobacterium atrosepticum (strain SCRI 1043 / ATCC BAA-672) (Erwinia carotovora subsp. atroseptica), this protein is HTH-type transcriptional activator RhaR.